We begin with the raw amino-acid sequence, 151 residues long: Putative membrane protein ORF10 (151 aa).

2 helical membrane-spanning segments follow: residues 7-23 and 107-123; these read LCLA…GVVV and GLVA…IIMY.

It localises to the membrane. The polypeptide is Putative membrane protein ORF10 (ORF10) (Ictalurid herpesvirus 1 (strain Auburn) (IcHV-1)).